A 426-amino-acid chain; its full sequence is Glutamate-1-semialdehyde 2,1-aminomutase (426 aa).

Lys-265 carries the post-translational modification N6-(pyridoxal phosphate)lysine.

Belongs to the class-III pyridoxal-phosphate-dependent aminotransferase family. HemL subfamily. Homodimer. Pyridoxal 5'-phosphate serves as cofactor.

It is found in the cytoplasm. The catalysed reaction is (S)-4-amino-5-oxopentanoate = 5-aminolevulinate. It participates in porphyrin-containing compound metabolism; protoporphyrin-IX biosynthesis; 5-aminolevulinate from L-glutamyl-tRNA(Glu): step 2/2. This chain is Glutamate-1-semialdehyde 2,1-aminomutase, found in Alcanivorax borkumensis (strain ATCC 700651 / DSM 11573 / NCIMB 13689 / SK2).